A 197-amino-acid polypeptide reads, in one-letter code: MQAGVIAVQGDVAEHAAAVENAAAAHGEPAEVVEVRDAGIVPDCDVLLMPGGESTTISRLIRREGIDEEIREHVASGKPVLATCAGLIVCSRDAKDDRVDALGLVNVSVDRNAFGRQKDSFEAKIPMTGLDEPFHAVFIRAPLIDDVGEGVEVLATVDGRPVAVRDGPVVATAFHPELTDDSRIHDLAFFPEQEVVA.

52 to 54 lines the L-glutamine pocket; sequence GES. Catalysis depends on C84, which acts as the Nucleophile. Residues R111 and 139-140 contribute to the L-glutamine site; that span reads IR. Active-site charge relay system residues include H175 and E177.

Belongs to the glutaminase PdxT/SNO family. As to quaternary structure, in the presence of PdxS, forms a dodecamer of heterodimers. Only shows activity in the heterodimer.

The enzyme catalyses aldehydo-D-ribose 5-phosphate + D-glyceraldehyde 3-phosphate + L-glutamine = pyridoxal 5'-phosphate + L-glutamate + phosphate + 3 H2O + H(+). It catalyses the reaction L-glutamine + H2O = L-glutamate + NH4(+). It functions in the pathway cofactor biosynthesis; pyridoxal 5'-phosphate biosynthesis. Functionally, catalyzes the hydrolysis of glutamine to glutamate and ammonia as part of the biosynthesis of pyridoxal 5'-phosphate. The resulting ammonia molecule is channeled to the active site of PdxS. The protein is Pyridoxal 5'-phosphate synthase subunit PdxT of Halorubrum lacusprofundi (strain ATCC 49239 / DSM 5036 / JCM 8891 / ACAM 34).